The sequence spans 223 residues: Endonuclease NucS (223 aa).

Belongs to the NucS endonuclease family.

The protein localises to the cytoplasm. Its function is as follows. Cleaves both 3' and 5' ssDNA extremities of branched DNA structures. This chain is Endonuclease NucS, found in Mycobacterium marinum (strain ATCC BAA-535 / M).